The following is a 146-amino-acid chain: Hemoglobin subunit beta (146 aa).

The 145-residue stretch at 2-146 folds into the Globin domain; it reads HWSAEEKQLI…VAHALARKYH (145 aa). Residues H63 and H92 each coordinate heme b.

This sequence belongs to the globin family. Heterotetramer of two alpha chains and two beta chains. In terms of tissue distribution, red blood cells.

Involved in oxygen transport from the lung to the various peripheral tissues. In Eudyptes chrysocome (Western rockhopper penguin), this protein is Hemoglobin subunit beta (HBB).